We begin with the raw amino-acid sequence, 119 residues long: Probable cyclase otaY (119 aa).

It belongs to the aurE cyclase family.

It participates in mycotoxin biosynthesis. In terms of biological role, probable cyclase; part of the gene cluster that mediates the biosynthesis of ochratoxin A (OTA), a mycotoxin composed of a chlorinated type I polyketide dihydroisocoumarin moiety linked to L-phenylalanine, and demonstrated to have nephrotoxic, immunotoxic, genotoxic, neurotoxic, and teratogenic properties. OtaY is probably involved in the polyketide cyclization. The pathway begins with the highly reducing polyketide synthase otaA that catalyzes the formation of the isocoumarin group during the initial stages of biosynthesis, starting from one acetate and 4 malonate units, to originate the characteristic pentaketide skeleton 7-methylmellein (7-MM) of the OTA molecule. The newly identified cyclase otaY might be involved in the polyketide cyclization reaction during the initial steps of the OTA biosynthesis. 7-MM is then oxidized into 7-carboxymellein (also called ochratoxin beta) by the cytochrome P450 monooxygenase otaC. The NRPS encoded by the otaB gene is involved in the linking of phenylalanine to the dihydroisocoumarin ring. The reaction catalyzed by NRPS results in the production of ochratoxin B (OTB), which is the non-chlorinated analog of OTA and which subsequently serves as the substrate of the halogenase otaD for chlorination activity to form the final molecular structure of OTA, containing a chlorine atom in the C-5 position of the molecule. In Aspergillus niger (strain ATCC MYA-4892 / CBS 513.88 / FGSC A1513), this protein is Probable cyclase otaY.